A 196-amino-acid polypeptide reads, in one-letter code: Nucleoside triphosphate pyrophosphatase (196 aa).

The active-site Proton acceptor is Asp-72.

The protein belongs to the Maf family. Requires a divalent metal cation as cofactor.

The protein resides in the cytoplasm. The catalysed reaction is a ribonucleoside 5'-triphosphate + H2O = a ribonucleoside 5'-phosphate + diphosphate + H(+). It carries out the reaction a 2'-deoxyribonucleoside 5'-triphosphate + H2O = a 2'-deoxyribonucleoside 5'-phosphate + diphosphate + H(+). In terms of biological role, nucleoside triphosphate pyrophosphatase. May have a dual role in cell division arrest and in preventing the incorporation of modified nucleotides into cellular nucleic acids. In Chlamydia muridarum (strain MoPn / Nigg), this protein is Nucleoside triphosphate pyrophosphatase.